A 419-amino-acid chain; its full sequence is Tryptophan synthase beta chain (419 aa).

Lys-86 is subject to N6-(pyridoxal phosphate)lysine. Residues Val-394–Lys-403 are compositionally biased toward basic and acidic residues. Residues Val-394–Glu-419 form a disordered region. The segment covering Ala-404–Glu-419 has biased composition (polar residues).

Belongs to the TrpB family. In terms of assembly, tetramer of two alpha and two beta chains. Requires pyridoxal 5'-phosphate as cofactor.

It carries out the reaction (1S,2R)-1-C-(indol-3-yl)glycerol 3-phosphate + L-serine = D-glyceraldehyde 3-phosphate + L-tryptophan + H2O. Its pathway is amino-acid biosynthesis; L-tryptophan biosynthesis; L-tryptophan from chorismate: step 5/5. Its function is as follows. The beta subunit is responsible for the synthesis of L-tryptophan from indole and L-serine. This is Tryptophan synthase beta chain from Shewanella halifaxensis (strain HAW-EB4).